The sequence spans 108 residues: UPF0145 protein THA_1434 (108 aa).

The protein belongs to the UPF0145 family.

The protein is UPF0145 protein THA_1434 of Thermosipho africanus (strain TCF52B).